Here is a 902-residue protein sequence, read N- to C-terminus: AAA+ ATPase ClpV1 (902 aa).

The Clp R domain maps to 10–151 (FGKLNSLAYK…KVEALTERFD (142 aa)). Repeat stretches follow at residues 13–78 (LNSL…LDRL) and 88–151 (LSSH…ERFD). An ATP-binding site is contributed by 237 to 244 (GEAGVGKT). Positions 441-559 (AEVDDSRRRI…AQLSALQGEE (119 aa)) form a coiled coil. 640–647 (GTSGVGKT) contributes to the ATP binding site.

This sequence belongs to the ClpA/ClpB family. In terms of assembly, interacts with TagJ.

It is found in the cytoplasm. In terms of biological role, component of the H1 type VI (H1-T6SS) secretion system that plays a role in the release of toxins targeting both eukaryotic and prokaryotic species. Acts as an AAA(+) ATPase that disassembles the contracted sheath, which resets the systems for reassembly of an extended sheath that is ready to fire again. This is AAA+ ATPase ClpV1 (clpV1) from Pseudomonas aeruginosa (strain ATCC 15692 / DSM 22644 / CIP 104116 / JCM 14847 / LMG 12228 / 1C / PRS 101 / PAO1).